The following is a 517-amino-acid chain: GTPase Obg (517 aa).

Residues 2–159 enclose the Obg domain; the sequence is ATFVDTVTLH…GDVVLELKVV (158 aa). One can recognise an OBG-type G domain in the interval 160-336; it reads ADVALVGYPS…LSFALAELVK (177 aa). GTP contacts are provided by residues 166–173, 191–195, 212–215, 288–291, and 317–319; these read GYPSAGKS, FTTLH, DVPG, NKID, and STV. Ser173 and Thr193 together coordinate Mg(2+). The region spanning 355–439 is the OCT domain; sequence PRAVDEKPFT…GDGVVFDWEP (85 aa). Residues 490–517 form a disordered region; sequence EGEAGLWADEDGTGQDGTDEDATTDAKA. Acidic residues predominate over residues 497-517; it reads ADEDGTGQDGTDEDATTDAKA.

This sequence belongs to the TRAFAC class OBG-HflX-like GTPase superfamily. OBG GTPase family. In terms of assembly, monomer. It depends on Mg(2+) as a cofactor.

It is found in the cytoplasm. Functionally, an essential GTPase which binds GTP, GDP and possibly (p)ppGpp with moderate affinity, with high nucleotide exchange rates and a fairly low GTP hydrolysis rate. Plays a role in control of the cell cycle, stress response, ribosome biogenesis and in those bacteria that undergo differentiation, in morphogenesis control. In Clavibacter sepedonicus (Clavibacter michiganensis subsp. sepedonicus), this protein is GTPase Obg.